Here is a 292-residue protein sequence, read N- to C-terminus: MLKKYLFLTKPGILFGNFITTLGGFFLAAQGHVDFLLLILTLLGTTFVVASGCVVNNVIDQDIDQKMERTQNRALVKKTVSPSTALIFAFILGIIGFGILWFWVNPYSFSFAIIGFVVYVGFYSLWTKRTSIHQTIIGSISGASPPVIGYTAVTHQFDVAALLIFLAYGLWQMPHSWAIAIYRFDDYKNAGIPILPVARSVYRTKVECLIYIVLFAAVLNGLYCFGYTNVFFLLTFNVLTAYWLYLSIIGFKAENDQLWAKRLFLFSVILITLLSLSFSFTYQSPAPNLPLF.

9 consecutive transmembrane segments (helical) span residues 13–33, 35–55, 84–104, 106–126, 135–155, 161–181, 206–226, 231–251, and 263–283; these read ILFG…QGHV, FLLL…GCVV, TALI…WFWV, PYSF…YSLW, TIIG…AVTH, ALLI…AIAI, VECL…YCFG, FFLL…IIGF, and LFLF…FTYQ.

It belongs to the UbiA prenyltransferase family. Protoheme IX farnesyltransferase subfamily.

It is found in the cell inner membrane. The catalysed reaction is heme b + (2E,6E)-farnesyl diphosphate + H2O = Fe(II)-heme o + diphosphate. It functions in the pathway porphyrin-containing compound metabolism; heme O biosynthesis; heme O from protoheme: step 1/1. Functionally, converts heme B (protoheme IX) to heme O by substitution of the vinyl group on carbon 2 of heme B porphyrin ring with a hydroxyethyl farnesyl side group. The polypeptide is Protoheme IX farnesyltransferase (Acinetobacter baylyi (strain ATCC 33305 / BD413 / ADP1)).